A 196-amino-acid polypeptide reads, in one-letter code: Pyridoxal 5'-phosphate synthase subunit PdxT (196 aa).

Residue G46–S48 coordinates L-glutamine. C78 serves as the catalytic Nucleophile. L-glutamine-binding positions include R105 and I134–R135. Catalysis depends on charge relay system residues H170 and E172.

Belongs to the glutaminase PdxT/SNO family. In terms of assembly, in the presence of PdxS, forms a dodecamer of heterodimers. Only shows activity in the heterodimer.

The enzyme catalyses aldehydo-D-ribose 5-phosphate + D-glyceraldehyde 3-phosphate + L-glutamine = pyridoxal 5'-phosphate + L-glutamate + phosphate + 3 H2O + H(+). It carries out the reaction L-glutamine + H2O = L-glutamate + NH4(+). Its pathway is cofactor biosynthesis; pyridoxal 5'-phosphate biosynthesis. Its function is as follows. Catalyzes the hydrolysis of glutamine to glutamate and ammonia as part of the biosynthesis of pyridoxal 5'-phosphate. The resulting ammonia molecule is channeled to the active site of PdxS. The protein is Pyridoxal 5'-phosphate synthase subunit PdxT of Pelotomaculum thermopropionicum (strain DSM 13744 / JCM 10971 / SI).